A 357-amino-acid polypeptide reads, in one-letter code: Peptide chain release factor 1 (357 aa).

Q233 bears the N5-methylglutamine mark. Residues 284 to 305 (RSASISADRKSQVGTGDRSERI) form a disordered region.

The protein belongs to the prokaryotic/mitochondrial release factor family. Post-translationally, methylated by PrmC. Methylation increases the termination efficiency of RF1.

It localises to the cytoplasm. Peptide chain release factor 1 directs the termination of translation in response to the peptide chain termination codons UAG and UAA. The polypeptide is Peptide chain release factor 1 (Clostridium novyi (strain NT)).